The sequence spans 839 residues: AMP deaminase (839 aa).

The chain crosses the membrane as a helical span at residues 8–28 (LALAALFGASFVAVSGFFMHF). Residues 40–167 (ERKENPDGDE…DDDDNLTNSE (128 aa)) are disordered. A compositionally biased stretch (gly residues) spans 85-94 (DGGGGGGGDT). A phosphoserine mark is found at Ser134 and Ser140. Acidic residues predominate over residues 153–162 (SVEESDDDDN). Residue Ser203 is modified to Phosphoserine. Residue 289–296 (AHYPQGKS) participates in ATP binding. Zn(2+)-binding residues include His391 and His393. Substrate is bound by residues His393 and 462–467 (KFNLKY). His659 is a binding site for Zn(2+). Glu662 is a substrate binding site. The active-site Proton acceptor is His681. Asp736 serves as a coordination point for Zn(2+). Substrate is bound at residue 737 to 740 (DPLQ).

Belongs to the metallo-dependent hydrolases superfamily. Adenosine and AMP deaminases family. In terms of assembly, homodimer. Interacts with AHK4. Interacts with EER5. Zn(2+) serves as cofactor. In terms of tissue distribution, expressed in seedlings, roots, leaves, flowers, pollen grains, pollen tubes and siliques, and at a lower level in stems.

The protein localises to the membrane. The protein resides in the microsome membrane. It carries out the reaction AMP + H2O + H(+) = IMP + NH4(+). Its pathway is purine metabolism; IMP biosynthesis via salvage pathway; IMP from AMP: step 1/1. Its activity is regulated as follows. Activated by ATP. Activated by sulfate ions (in vitro). Inhibited by phosphate ions. Its function is as follows. AMP deaminase plays a critical role in energy metabolism. Essential for the transition from zygote to embryo. This is AMP deaminase from Arabidopsis thaliana (Mouse-ear cress).